The sequence spans 836 residues: Protein O-mannosyl-transferase tmtc2 (836 aa).

The chain crosses the membrane as a helical span at residues 1–21 (MIAELLSSALGLLLYLNTLGA). Topologically, residues 22–77 (DFCYDDSRAIKTNQDLLPETPWNHIFFNDFWGTLLTHSGSHKSYRPLCTLSFRLNY) are extracellular. Residues 78–98 (LFGGLDPWNYHLVNVLLHSAV) traverse the membrane as a helical segment. The Cytoplasmic portion of the chain corresponds to 99–107 (TGLFTNLCK). Residues 108-128 (ALFGSGCWTLIAGLLFASHPI) form a helical membrane-spanning segment. Topologically, residues 129-132 (HTEA) are extracellular. A helical transmembrane segment spans residues 133–153 (VSGIVGRADVGSGLFFLLSLL). Residues 154–164 (CYMKHCSTRGY) are Cytoplasmic-facing. A helical membrane pass occupies residues 165–185 (SLSSWCWILCAGFWAACSMLW). At 186–188 (KEQ) the chain is on the extracellular side. A helical membrane pass occupies residues 189–209 (GVTVLAVSAVYDVFVFHKLKM). At 210 to 220 (NQIISVVFKEK) the chain is on the cytoplasmic side. A helical transmembrane segment spans residues 221–241 (NVSFFFSVGLLFAWGVILLGA). The Extracellular segment spans residues 242–312 (RFYWMGNTPP…KTITDWRNIH (71 aa)). A helical membrane pass occupies residues 313–333 (TVAFYILLILLAYSSLKGSAI). Residues 334–392 (KRDCNGKVFMNGKQNTNGHSCQSDLEHKNAEQNPVIASKLENGVKHHNSHEMQLPSTEN) are Cytoplasmic-facing. A helical transmembrane segment spans residues 393 to 413 (IVVLALSLLIVPFVPASNLFF). Position 414 (Y414) is a topological domain, extracellular. Residues 415-435 (VGFVIAERVLYIPSMGFCLLV) form a helical membrane-spanning segment. Topologically, residues 436-449 (TVGARALYIKAQKN) are cytoplasmic. Residues 450–470 (ILKNLLFYATAALIVFYGLKT) form a helical membrane-spanning segment. Residues 471–836 (VVRNGDWKNE…EKQGLKNSKT (366 aa)) are Extracellular-facing. TPR repeat units lie at residues 493 to 526 (AKAW…RSNM), 527 to 560 (ADML…RPTL), 561 to 594 (ASGY…PDEN), 606 to 639 (TSCL…MPRQ), 643 to 676 (QSLY…KPDH), 677 to 710 (IPAH…DPNK), 711 to 744 (GNCY…DSSE), 745 to 778 (FDVV…RQNY), and 779 to 812 (PAAL…KPDD).

The protein belongs to the TMTC family.

The protein resides in the membrane. Its subcellular location is the endoplasmic reticulum. It carries out the reaction a di-trans,poly-cis-dolichyl beta-D-mannosyl phosphate + L-seryl-[protein] = 3-O-(alpha-D-mannosyl)-L-seryl-[protein] + a di-trans,poly-cis-dolichyl phosphate + H(+). It catalyses the reaction a di-trans,poly-cis-dolichyl beta-D-mannosyl phosphate + L-threonyl-[protein] = 3-O-(alpha-D-mannosyl)-L-threonyl-[protein] + a di-trans,poly-cis-dolichyl phosphate + H(+). It participates in protein modification; protein glycosylation. Functionally, transfers mannosyl residues to the hydroxyl group of serine or threonine residues. The protein is Protein O-mannosyl-transferase tmtc2 (tmtc2) of Xenopus laevis (African clawed frog).